Reading from the N-terminus, the 145-residue chain is MIALIQRVTRASVTVEDEVTGEIGLGLLVLLGVEKEDDEQKANRLCERVLGYRIFSDADGKMNLNVQQAGGSVLVVSQFTLAADTERGMRPSFSGGAAPDRAQALYEYFVERCRQQAINTQTGRFAADMQVELVNDGPVTFWLQV.

The Gly-cisPro motif, important for rejection of L-amino acids motif lies at 137–138 (GP).

It belongs to the DTD family. In terms of assembly, homodimer.

The protein localises to the cytoplasm. The catalysed reaction is glycyl-tRNA(Ala) + H2O = tRNA(Ala) + glycine + H(+). The enzyme catalyses a D-aminoacyl-tRNA + H2O = a tRNA + a D-alpha-amino acid + H(+). Functionally, an aminoacyl-tRNA editing enzyme that deacylates mischarged D-aminoacyl-tRNAs. Also deacylates mischarged glycyl-tRNA(Ala), protecting cells against glycine mischarging by AlaRS. Acts via tRNA-based rather than protein-based catalysis; rejects L-amino acids rather than detecting D-amino acids in the active site. By recycling D-aminoacyl-tRNA to D-amino acids and free tRNA molecules, this enzyme counteracts the toxicity associated with the formation of D-aminoacyl-tRNA entities in vivo and helps enforce protein L-homochirality. The chain is D-aminoacyl-tRNA deacylase from Salmonella paratyphi C (strain RKS4594).